The primary structure comprises 618 residues: Proline--tRNA ligase (618 aa).

The protein belongs to the class-II aminoacyl-tRNA synthetase family. ProS type 1 subfamily. As to quaternary structure, homodimer.

The protein localises to the cytoplasm. The catalysed reaction is tRNA(Pro) + L-proline + ATP = L-prolyl-tRNA(Pro) + AMP + diphosphate. Its function is as follows. Catalyzes the attachment of proline to tRNA(Pro) in a two-step reaction: proline is first activated by ATP to form Pro-AMP and then transferred to the acceptor end of tRNA(Pro). As ProRS can inadvertently accommodate and process non-cognate amino acids such as alanine and cysteine, to avoid such errors it has two additional distinct editing activities against alanine. One activity is designated as 'pretransfer' editing and involves the tRNA(Pro)-independent hydrolysis of activated Ala-AMP. The other activity is designated 'posttransfer' editing and involves deacylation of mischarged Ala-tRNA(Pro). The misacylated Cys-tRNA(Pro) is not edited by ProRS. In Streptococcus pyogenes serotype M2 (strain MGAS10270), this protein is Proline--tRNA ligase.